Consider the following 117-residue polypeptide: Ribosome-binding factor A (117 aa).

This sequence belongs to the RbfA family. In terms of assembly, monomer. Binds 30S ribosomal subunits, but not 50S ribosomal subunits or 70S ribosomes.

The protein localises to the cytoplasm. Functionally, one of several proteins that assist in the late maturation steps of the functional core of the 30S ribosomal subunit. Associates with free 30S ribosomal subunits (but not with 30S subunits that are part of 70S ribosomes or polysomes). Required for efficient processing of 16S rRNA. May interact with the 5'-terminal helix region of 16S rRNA. The polypeptide is Ribosome-binding factor A (Bacillus subtilis (strain 168)).